Reading from the N-terminus, the 476-residue chain is Sulfite exporter TauE/SafE family protein 3 (476 aa).

Transmembrane regions (helical) follow at residues W8 to V28, F76 to A92, V99 to F115, A120 to L142, I151 to G171, V172 to L192, V257 to I277, V291 to L311, F339 to G359, P360 to M380, F397 to Q417, and I433 to I453.

Belongs to the 4-toluene sulfonate uptake permease (TSUP) (TC 2.A.102) family.

It localises to the membrane. This is Sulfite exporter TauE/SafE family protein 3 from Arabidopsis thaliana (Mouse-ear cress).